We begin with the raw amino-acid sequence, 359 residues long: Ornithine cyclodeaminase (359 aa).

2 residues coordinate L-ornithine: Arg53 and Lys77. NAD(+) contacts are provided by residues Thr92, Arg120, 147–148 (AQ), Asp169, Thr209, 232–235 (VGGD), Lys239, and Ser300. Residue Arg120 participates in L-ornithine binding. L-ornithine is bound at residue Asp235. The active-site Proton donor/acceptor is the Asp235. Val301 is an L-ornithine binding site.

The protein belongs to the ornithine cyclodeaminase/mu-crystallin family. NAD(+) serves as cofactor.

The catalysed reaction is L-ornithine = L-proline + NH4(+). The protein operates within amino-acid biosynthesis; L-proline biosynthesis; L-proline from L-ornithine: step 1/1. Functionally, catalyzes the conversion of L-ornithine into L-proline with release of ammonia. The polypeptide is Ornithine cyclodeaminase (Brucella abortus biovar 1 (strain 9-941)).